An 81-amino-acid chain; its full sequence is uncharacterized protein (81 aa).

Residues 46-81 form a disordered region; the sequence is ASSPVVKRKSLVKRKSPVKRSPLKKRSQMRTSPCEA. Over residues 51-73 the composition is skewed to basic residues; sequence VKRKSLVKRKSPVKRSPLKKRSQ.

This is an uncharacterized protein from Frog virus 3 (isolate Goorha) (FV-3).